A 150-amino-acid polypeptide reads, in one-letter code: MVGLSIVLEMTNNNNNNNNNNNNNNNKNPLSEGVLISPKVVNKANIIVTTAVTTDTTNLRRCYQDSGFLEHCFLCRRKLLPAKDIYMYKGDRAFCSVECRSKQMIMDEEESLRREYCSLMDVKKKKFDSPATAPSRYRRDPRNQAGGFAY.

A compositionally biased stretch (low complexity) spans 12-28; that stretch reads NNNNNNNNNNNNNNNKN. Residues 12 to 31 form a disordered region; sequence NNNNNNNNNNNNNNNKNPLS. Residues 67-111 form an FLZ-type zinc finger; the sequence is GFLEHCFLCRRKLLPAKDIYMYKGDRAFCSVECRSKQMIMDEEES. Residues 129 to 150 form a disordered region; the sequence is SPATAPSRYRRDPRNQAGGFAY.

It belongs to the FLZ family. As to quaternary structure, interacts with KIN10 and KIN11 via its FLZ-type zinc finger domain. Interacts with KINB1 and KINB3 via its N-terminal part. Forms homodimer and heterodimer with FLZ1, FLZ2 and FLZ7 in vitro.

It is found in the cytoplasm. Its subcellular location is the P-body. May act as an adapter to facilitate the interaction of SnRK1 complex with effector proteins, conferring tissue- and stimulus-type specific differences in the SnRK1 regulation pathway. In Arabidopsis thaliana (Mouse-ear cress), this protein is FCS-Like Zinc finger 15.